Reading from the N-terminus, the 387-residue chain is Phosphoglycerate kinase (387 aa).

Substrate-binding positions include 21 to 23 (DLN), Arg36, 59 to 62 (HLGR), Arg113, and Arg146. Residues Lys197, Glu314, and 340-343 (GGDT) each bind ATP.

The protein belongs to the phosphoglycerate kinase family. As to quaternary structure, monomer.

It is found in the cytoplasm. It catalyses the reaction (2R)-3-phosphoglycerate + ATP = (2R)-3-phospho-glyceroyl phosphate + ADP. Its pathway is carbohydrate degradation; glycolysis; pyruvate from D-glyceraldehyde 3-phosphate: step 2/5. This is Phosphoglycerate kinase from Aliivibrio fischeri (strain ATCC 700601 / ES114) (Vibrio fischeri).